Here is a 424-residue protein sequence, read N- to C-terminus: Probable methyltransferase EP424R (424 aa).

The Adrift-type SAM-dependent 2'-O-MTase domain maps to 103 to 315 (QIVTNAWLKM…TYIVGKNRLR (213 aa)). 2 residues coordinate S-adenosyl-L-methionine: Gly-135 and Asp-228. The Proton acceptor role is filled by Lys-268.

The protein localises to the virion. The chain is Probable methyltransferase EP424R from Ornithodoros (relapsing fever ticks).